A 95-amino-acid chain; its full sequence is Small ubiquitin-related modifier 4 (95 aa).

One can recognise a Ubiquitin-like domain in the interval 17–95 (HINLKVAGQD…VLQQQTGGVY (79 aa)). Glycine 93 participates in a covalent cross-link: Glycyl lysine isopeptide (Gly-Lys) (interchain with K-? in acceptor proteins). A propeptide spanning residues 94–95 (VY) is cleaved from the precursor.

It belongs to the ubiquitin family. SUMO subfamily. As to quaternary structure, interacts with SAE2. Covalently attached to a number of proteins.

Functionally, ubiquitin-like protein which can be covalently attached to target lysines as a monomer. Does not seem to be involved in protein degradation and may modulate protein subcellular localization, stability or activity. Upon oxidative stress, conjugates to various anti-oxidant enzymes, chaperones, and stress defense proteins. May also conjugate to NFKBIA, TFAP2A and FOS, negatively regulating their transcriptional activity, and to NR3C1, positively regulating its transcriptional activity. Covalent attachment to its substrates requires prior activation by the E1 complex SAE1-SAE2 and linkage to the E2 enzyme UBE2I. In Sus scrofa (Pig), this protein is Small ubiquitin-related modifier 4 (SUMO4).